A 330-amino-acid polypeptide reads, in one-letter code: uncharacterized protein (330 aa).

2 disordered regions span residues 136-160 and 172-314; these read VPPS…DESS and DNEK…SQFN. Pro residues predominate over residues 223–235; sequence PKPPAPPPPPPVP. Over residues 236-246 the composition is skewed to low complexity; sequence ISMTPAAISVT. Composition is skewed to polar residues over residues 263-276, 284-294, and 304-314; these read AQST…TTDE, TRSSSQSNSTV, and PASSPTFSQFN.

This is an uncharacterized protein from Danio rerio (Zebrafish).